The primary structure comprises 197 residues: Large ribosomal subunit protein eL15 (197 aa).

Positions 163–172 (GKTSAGRKGR) are enriched in basic residues. Residues 163–197 (GKTSAGRKGRGMQTRGTGTEKTRPSVRSNLNRSKK) are disordered. The segment covering 186–197 (PSVRSNLNRSKK) has biased composition (polar residues).

It belongs to the eukaryotic ribosomal protein eL15 family.

This chain is Large ribosomal subunit protein eL15, found in Methanococcoides burtonii (strain DSM 6242 / NBRC 107633 / OCM 468 / ACE-M).